The sequence spans 441 residues: Homoserine dehydrogenase (441 aa).

2 residues coordinate NADP(+): asparagine 17 and valine 18. NAD(+)-binding residues include valine 18, valine 37, and glycine 47. Valine 18 contributes to the NADPH binding site. NADP(+) contacts are provided by arginine 49, arginine 50, and lysine 107. Position 49 (arginine 49) interacts with NADPH. Residue lysine 107 participates in NADPH binding. Positions 131, 134, 136, and 138 each coordinate Na(+). NADP(+) is bound by residues glycine 189 and glutamate 192. Residues glutamate 192 and aspartate 203 each coordinate L-homoserine. Residue lysine 207 is the Proton donor of the active site. Position 309 (glycine 309) interacts with NADP(+). Glycine 309 serves as a coordination point for NAD(+). Glycine 309 serves as a coordination point for NADPH. An ACT domain is found at 356-435; it reads YVSMNVADKP…VVQGVSSVIR (80 aa).

It belongs to the homoserine dehydrogenase family. A metal cation is required as a cofactor.

The catalysed reaction is L-homoserine + NADP(+) = L-aspartate 4-semialdehyde + NADPH + H(+). It carries out the reaction L-homoserine + NAD(+) = L-aspartate 4-semialdehyde + NADH + H(+). It participates in amino-acid biosynthesis; L-methionine biosynthesis via de novo pathway; L-homoserine from L-aspartate: step 3/3. The protein operates within amino-acid biosynthesis; L-threonine biosynthesis; L-threonine from L-aspartate: step 3/5. Its function is as follows. Catalyzes the conversion of L-aspartate-beta-semialdehyde (L-Asa) to L-homoserine (L-Hse), the third step in the biosynthesis of threonine and methionine from aspartate. This chain is Homoserine dehydrogenase (hom), found in Mycobacterium tuberculosis (strain CDC 1551 / Oshkosh).